Reading from the N-terminus, the 415-residue chain is Zona pellucida-like domain-containing protein 1 (415 aa).

Positions Met-1–Ala-19 are cleaved as a signal peptide. The Extracellular portion of the chain corresponds to Gln-20–Ser-372. The 278-residue stretch at Tyr-43–Asp-320 folds into the ZP domain. 2 cysteine pairs are disulfide-bonded: Cys-44-Cys-155 and Cys-79-Cys-104. Residues Asn-121 and Asn-164 are each glycosylated (N-linked (GlcNAc...) asparagine). Cystine bridges form between Cys-235/Cys-296 and Cys-255/Cys-313. The tract at residues Arg-323 to Pro-360 is disordered. Polar residues-rich tracts occupy residues Thr-325 to Ala-336 and Thr-350 to Ser-359. Residues Ala-373–Leu-393 form a helical membrane-spanning segment. Topologically, residues Ala-394–Asp-415 are cytoplasmic.

In terms of processing, proteolytically cleaved before the transmembrane segment to yield the secreted form found in the extracellular matrix of the cupula. Detected in placenta, kidney, lung, pancreas and at very low level in other tissues.

Its subcellular location is the cytoplasmic vesicle membrane. It is found in the secreted. The protein resides in the extracellular space. The protein localises to the extracellular matrix. In terms of biological role, glycoprotein which is a component of the gelatinous extracellular matrix in the cupulae of the vestibular organ. The sequence is that of Zona pellucida-like domain-containing protein 1 (ZPLD1) from Homo sapiens (Human).